Consider the following 186-residue polypeptide: Translation initiation factor IF-3 (186 aa).

The protein belongs to the IF-3 family. As to quaternary structure, monomer.

The protein localises to the cytoplasm. Its function is as follows. IF-3 binds to the 30S ribosomal subunit and shifts the equilibrium between 70S ribosomes and their 50S and 30S subunits in favor of the free subunits, thus enhancing the availability of 30S subunits on which protein synthesis initiation begins. The protein is Translation initiation factor IF-3 of Borrelia garinii subsp. bavariensis (strain ATCC BAA-2496 / DSM 23469 / PBi) (Borreliella bavariensis).